The following is a 261-amino-acid chain: Kallikrein-1 (261 aa).

A signal peptide spans 1 to 18 (MWFLILFLALSLGRNDAA). Residues 19–24 (PPVQSR) constitute a propeptide, activation peptide. Positions 25–258 (VVGGYNCEMN…FTPWIKEVMK (234 aa)) constitute a Peptidase S1 domain. Intrachain disulfides connect C31-C173, C50-C66, C152-C219, C184-C198, and C209-C234. Catalysis depends on H65, which acts as the Charge relay system. N108 is a glycosylation site (N-linked (GlcNAc...) asparagine). Catalysis depends on D120, which acts as the Charge relay system. Catalysis depends on S213, which acts as the Charge relay system.

This sequence belongs to the peptidase S1 family. Kallikrein subfamily. High levels in pancreas, submaxillary and parotid glands, spleen, and kidney.

It carries out the reaction Preferential cleavage of Arg-|-Xaa bonds in small molecule substrates. Highly selective action to release kallidin (lysyl-bradykinin) from kininogen involves hydrolysis of Met-|-Xaa or Leu-|-Xaa.. This is Kallikrein-1 (Ngfg) from Rattus norvegicus (Rat).